A 478-amino-acid polypeptide reads, in one-letter code: Dynein regulatory complex subunit 4 (478 aa).

Positions 1 to 12 (MAPKKKGKKGKA) are enriched in basic residues. The interval 1-29 (MAPKKKGKKGKAKGTAIVDGVAPEDMTKE) is disordered. A regulates microtubule-binding region spans residues 1–114 (MAPKKKGKKG…LLYEHQNNLA (114 aa)). 2 coiled-coil regions span residues 24-207 (EDMT…RKTE) and 242-426 (LNNL…ELAR). Residues 115–258 (EVKAEGTVVM…NSLKEQMEDM (144 aa)) form a microtubule-binding region. Positions 357-478 (QQKTGFKNLL…GPAGLVGAPT (122 aa)) are interaction with SMO.

Belongs to the DRC4 family. As to quaternary structure, component of the nexin-dynein regulatory complex (N-DRC). Interacts with microtubules. Interacts with SMO. Interacts (via coiled-coil domains) with RAB3B (in GTP-bound form). Interacts with DRC1. Interacts with DRC7. Highly expressed in adult testes and lung. Weakly or not expressed in other tested tissues.

Its subcellular location is the cytoplasm. It is found in the cytoskeleton. It localises to the cell projection. The protein resides in the cilium. The protein localises to the flagellum. Its subcellular location is the cilium axoneme. It is found in the cilium basal body. It localises to the golgi apparatus. The protein resides in the flagellum axoneme. In terms of biological role, component of the nexin-dynein regulatory complex (N-DRC), a key regulator of ciliary/flagellar motility which maintains the alignment and integrity of the distal axoneme and regulates microtubule sliding in motile axonemes. Plays an important role in the assembly of the N-DRC linker. Plays dual roles at both the primary (or non-motile) cilia to regulate hedgehog signaling and in motile cilia to coordinate cilia movement. Required for proper motile cilia functioning. Positively regulates ciliary smoothened (SMO)-dependent Hedgehog (Hh) signaling pathway by facilitating the trafficking of SMO into the cilium and the stimulation of SMO activity in a GRK2-dependent manner. May play a role in the spermatozoa motility. The polypeptide is Dynein regulatory complex subunit 4 (Gas8) (Mus musculus (Mouse)).